Here is a 244-residue protein sequence, read N- to C-terminus: Probable ABC transporter ATP-binding protein p29 (244 aa).

The ABC transporter domain occupies 6 to 241; the sequence is LVFDQVSLRY…KLTKQKLMQI (236 aa). 38–45 is a binding site for ATP; it reads GKSGVGKT.

The protein belongs to the ABC transporter superfamily.

Its function is as follows. Part of a high-affinity transport system. This chain is Probable ABC transporter ATP-binding protein p29 (p29), found in Mycoplasma pneumoniae (strain ATCC 29342 / M129 / Subtype 1) (Mycoplasmoides pneumoniae).